The primary structure comprises 721 residues: Polyribonucleotide nucleotidyltransferase (721 aa).

Residues aspartate 511 and aspartate 517 each coordinate Mg(2+). Positions 577 to 637 constitute a KH domain; it reads PSTDFFHINP…SGVQAAREHI (61 aa). The region spanning 654–721 is the S1 motif domain; that stretch reads GDIHKGIVKK…KGNKISLGIA (68 aa).

It belongs to the polyribonucleotide nucleotidyltransferase family. Mg(2+) is required as a cofactor.

The protein resides in the cytoplasm. The catalysed reaction is RNA(n+1) + phosphate = RNA(n) + a ribonucleoside 5'-diphosphate. Involved in mRNA degradation. Catalyzes the phosphorolysis of single-stranded polyribonucleotides processively in the 3'- to 5'-direction. The chain is Polyribonucleotide nucleotidyltransferase from Sulfurimonas denitrificans (strain ATCC 33889 / DSM 1251) (Thiomicrospira denitrificans (strain ATCC 33889 / DSM 1251)).